The sequence spans 264 residues: Major prion protein (264 aa).

The first 24 residues, 1-24, serve as a signal peptide directing secretion; sequence MVKSHIGSWILVLFVAMWSDVGLC. An interaction with GRB2, ERI3 and SYN1 region spans residues 25-241; that stretch reads KKRPKPGGGW…ESQAYYQRGA (217 aa). The interval 28 to 119 is disordered; the sequence is PKPGGGWNTG…WNKPSKPKTN (92 aa). A run of 6 repeats spans residues 54–62, 63–70, 71–78, 79–86, 87–94, and 95–103. The interval 54–103 is 6 X 8 AA tandem repeats of P-H-G-G-G-W-G-Q; sequence PQGGGGWGQPHGGGWGQPHGGGWGQPHGGGWGQPHGGGWGQPHGGGGWGQ. The span at 55 to 105 shows a compositional bias: gly residues; sequence QGGGGWGQPHGGGWGQPHGGGWGQPHGGGWGQPHGGGWGQPHGGGGWGQGG. Positions 72, 73, 74, 80, 81, 82, 88, 89, 90, 96, 98, and 99 each coordinate Cu(2+). Cys-190 and Cys-225 are oxidised to a cystine. Asn-192 and Asn-208 each carry an N-linked (GlcNAc...) asparagine glycan. Residue Ala-241 is the site of GPI-anchor amidated alanine attachment. Positions 242 to 264 are cleaved as a propeptide — removed in mature form; sequence SVILFSSPPVILLISFLIFLIVG.

The protein belongs to the prion family. As to quaternary structure, monomer and homodimer. Has a tendency to aggregate into amyloid fibrils containing a cross-beta spine, formed by a steric zipper of superposed beta-strands. Soluble oligomers may represent an intermediate stage on the path to fibril formation. Copper binding may promote oligomerization. Interacts with GRB2, APP, ERI3/PRNPIP and SYN1. Mislocalized cytosolically exposed PrP interacts with MGRN1; this interaction alters MGRN1 subcellular location and causes lysosomal enlargement. Interacts with KIAA1191.

Its subcellular location is the cell membrane. The protein localises to the golgi apparatus. Functionally, its primary physiological function is unclear. Has cytoprotective activity against internal or environmental stresses. May play a role in neuronal development and synaptic plasticity. May be required for neuronal myelin sheath maintenance. May play a role in iron uptake and iron homeostasis. Soluble oligomers are toxic to cultured neuroblastoma cells and induce apoptosis (in vitro). Association with GPC1 (via its heparan sulfate chains) targets PRNP to lipid rafts. Also provides Cu(2+) or Zn(2+) for the ascorbate-mediated GPC1 deaminase degradation of its heparan sulfate side chains. The chain is Major prion protein (PRNP) from Antilope cervicapra (Blackbuck).